The sequence spans 397 residues: RNA pseudouridine synthase 5 (397 aa).

The S4 RNA-binding domain maps to 64–114; that stretch reads APLPGWIKRIRDGQITVDGEVATDPDMILREGSKLVYHRLPWQEPFAPHLL.

Belongs to the pseudouridine synthase RluA family.

It carries out the reaction a uridine in RNA = a pseudouridine in RNA. This chain is RNA pseudouridine synthase 5, found in Oryza sativa subsp. japonica (Rice).